The following is a 352-amino-acid chain: C-X-C chemokine receptor type 4 (352 aa).

Positions 1–21 (MEGISIYTSDNYTEEMGSGDY) are important for chemokine binding and signaling. Topologically, residues 1–38 (MEGISIYTSDNYTEEMGSGDYDSIKEPCFREENAHFNR) are extracellular. Tyr7 carries the sulfotyrosine modification. Asn11 carries N-linked (GlcNAc...) asparagine glycosylation. Position 12 is a sulfotyrosine (Tyr12). A glycan (O-linked (Xyl...) (chondroitin sulfate) serine) is linked at Ser18. Position 21 is a sulfotyrosine (Tyr21). 2 disulfides stabilise this stretch: Cys28–Cys274 and Cys109–Cys186. Residues 39 to 63 (IFLPTIYSIIFLTGIVGNGLVILVM) traverse the membrane as a helical segment. At 64 to 77 (GYQKKLRSMTDKYR) the chain is on the cytoplasmic side. The chain crosses the membrane as a helical span at residues 78–99 (LHLSVADLLFVITLPFWAVDAV). A chemokine binding region spans residues 94-97 (WAVD). Residues 100–110 (ANWYFGNFLCK) are Extracellular-facing. A helical transmembrane segment spans residues 111-130 (AVHVIYTVNLYSSVLILAFI). Residues 113–117 (HVIYT) are chemokine binding. At 131-154 (SLDRYLAIVHATNSQKPRKLLAEK) the chain is on the cytoplasmic side. Residues 133–135 (DRY) carry the Important for signaling motif. Residues 135–147 (YLAIVHATNSQKP) are involved in dimerization; when bound to chemokine. The helical transmembrane segment at 155–174 (VVYVGVWIPALLLTIPDFIF) threads the bilayer. The Extracellular portion of the chain corresponds to 175 to 195 (ASVSEADDRYICDRFYPNDLW). The interval 186–190 (CDRFY) is chemokine binding, important for signaling. The tract at residues 191–210 (PNDLWVVVFQFQHIMVGLIL) is involved in dimerization. A helical membrane pass occupies residues 196-216 (VVVFQFQHIMVGLILPGIDIL). Residues 217–241 (SCYCIIISKLSHSKGHQKRKALKTT) lie on the Cytoplasmic side of the membrane. The chain crosses the membrane as a helical span at residues 242-261 (VILILAFFACWLPYYIGISI). Over 262 to 282 (DSFILLEIIKQGCEFENTVHK) the chain is Extracellular. The segment at 266–268 (LLE) is involved in dimerization. Residues 283–302 (WISITEALAFFHCCLNPILY) form a helical membrane-spanning segment. At 303–352 (AFLGAKFKTSAQHALTSVSRGSSLKILSKGKRGGHSSVSTESESSSFHSS) the chain is on the cytoplasmic side. Phosphoserine occurs at positions 319 and 321. Phosphoserine; by PKC and GRK6 is present on residues Ser324 and Ser325. Residues 329–352 (LSKGKRGGHSSVSTESESSSFHSS) form a disordered region. Ser330 is subject to Phosphoserine; by GRK6. Residue Lys331 forms a Glycyl lysine isopeptide (Lys-Gly) (interchain with G-Cter in ubiquitin) linkage. A compositionally biased stretch (low complexity) spans 337–352 (HSSVSTESESSSFHSS). A Phosphoserine; by GRK6 modification is found at Ser339. Ser348 and Ser351 each carry phosphoserine.

It belongs to the G-protein coupled receptor 1 family. Monomer. Can form homodimers. Interacts with CD164. Interacts with ARRB2; the interaction is dependent on the C-terminal phosphorylation of CXCR4 and allows activation of MAPK1 and MAPK3. Interacts with ARR3; the interaction is dependent on the C-terminal phosphorylation of CXCR4 and modulates calcium mobilization. Interacts with RNF113A; the interaction, enhanced by CXCL12, promotes CXCR4 ubiquitination and subsequent degradation. Interacts (via the cytoplasmic C-terminal) with ITCH (via the WW domains I and II); the interaction, enhanced by CXCL12, promotes CXCR4 ubiquitination and leads to its degradation. Interacts with extracellular ubiquitin. Interacts with DBN1; this interaction is enhanced by antigenic stimulation. Following LPS binding, may form a complex with GDF5, HSP90AA1 and HSPA8. In terms of processing, phosphorylated on agonist stimulation. Rapidly phosphorylated on serine and threonine residues in the C-terminal. Phosphorylation at Ser-324 and Ser-325 leads to recruitment of ITCH, ubiquitination and protein degradation. Post-translationally, ubiquitinated after ligand binding, leading to its degradation. Ubiquitinated by ITCH at the cell membrane on agonist stimulation. The ubiquitin-dependent mechanism, endosomal sorting complex required for transport (ESCRT), then targets CXCR4 for lysosomal degradation. This process is dependent also on prior Ser-/Thr-phosphorylation in the C-terminal of CXCR4. Also binding of ARRB1 to STAM negatively regulates CXCR4 sorting to lysosomes though modulating ubiquitination of SFR5S. Sulfation is required for efficient binding of CXCL12/SDF-1alpha and promotes its dimerization. In terms of processing, O- and N-glycosylated. N-glycosylation can mask coreceptor function. The O-glycosylation chondroitin sulfate attachment does not affect interaction with CXCL12/SDF-1alpha nor its coreceptor activity.

Its subcellular location is the cell membrane. It is found in the cell junction. It localises to the early endosome. The protein localises to the late endosome. The protein resides in the lysosome. Receptor for the C-X-C chemokine CXCL12/SDF-1 that transduces a signal by increasing intracellular calcium ion levels and enhancing MAPK1/MAPK3 activation. Involved in the AKT signaling cascade. Plays a role in regulation of cell migration, e.g. during wound healing. Acts as a receptor for extracellular ubiquitin; leading to enhanced intracellular calcium ions and reduced cellular cAMP levels. Binds bacterial lipopolysaccharide (LPS) et mediates LPS-induced inflammatory response, including TNF secretion by monocytes. Involved in hematopoiesis and in cardiac ventricular septum formation. Also plays an essential role in vascularization of the gastrointestinal tract, probably by regulating vascular branching and/or remodeling processes in endothelial cells. Involved in cerebellar development. In the CNS, could mediate hippocampal-neuron survival. The polypeptide is C-X-C chemokine receptor type 4 (CXCR4) (Macaca mulatta (Rhesus macaque)).